A 1162-amino-acid chain; its full sequence is MLVTPLLLVTLLCALCSAALYDSSSYVYYYQSAFRPPDGWHLHGGAYAVVNISSESNNAGSSSGCTVGTIHGGRVVNASSIAMTAPSSGMAWSSSQFCTAYCNFSDTTVFVTHCYKHGGCPITGMLQQHSIRVSAMKNGQLFYNLTVSVAKYPTFKSFQCVNNLTSVYLNGDLVYTSNETTDVTSAGVYFKAVGPITYKVMREVRALAYFVNGTAQDVILCDGSPRGLLACQYNTGNFSDGFYPFTNSSLVKQKFIVYRENSVNTTFTLHNFTFHNETGANPNPSGVQNIQTYQTQTAQSGYYNFNFSFLSSFVYKESNFMYGSYHPSCSFRLETINNGLWFNSLSVSIAYGPLQGGCKQSVFSGRATCCYAYSYGGPLLCKGVYSGELDHNFECGLLVYVTKSGGSRIQTATEPPVITQHNYNNITLNTCVDYNIYGRIGQGFITNVTDSAVSYNYLADAGLAILDTSGSIDIFVVQSEYGLNYYKVNPCEDVNQQFVVSGGKLVGILTSRNETGSQLLENQFYIKITNGTRRFRRSITESVENCPYVSYGKFCIKPDGSISTIVPKYLEQFVAPLLNVTENVLIPNSFNLTVTDEYIQTRMDKVQINCLQYICGNSLECRNLFQQYGPVCDNMLSVVNSVGQKEDMELLNFYSSTKPAGFNTPVLSNVSTGEFNISLFLTTPSSPRRRSFIEDLLFTSVESVGLPTDDAYKNCTAGPLGFLKDLVCAREYNGLLVLPPIITAEMQTLYTSSLVASMAFGGITAAGAIPFATQLQARINHLGITQSLLLKNQEKIAASFNKAIGHMQEGFRSTSLALQQIQDVVNKQSAILTETMASLNKNFGAISSVIQEIYLQLDAIQANAQVDRLITGRLSSLSVLASAKQAEYIRVSQQRELATQKINECVKSQSTRYSFCGNGRHVLTIPQNAPNGIVFIHFTYTPESFVNVTAIVGFCVKPNNASQYAIVPVNGRGIFIQVNDSYYITARDMYMPRHITAGDIVTLTSCQANYVSVNKTVITTFVENDDFDFDDELSKWWIETKYELPDFDQFNYTIPVLNITYDIDKIEEVIKGLNDSLIDLETLSILKTYIKWPWYVWLAIAFATIIFILILGWVFFMTGCCGCCCGCFGIIPLMSKCGKKSSYYTTFDNDVVTEQYRPKKSV.

Positions 1 to 18 (MLVTPLLLVTLLCALCSA) are cleaved as a signal peptide. The Extracellular segment spans residues 19–1095 (ALYDSSSYVY…LKTYIKWPWY (1077 aa)). N-linked (GlcNAc...) asparagine; by host glycans are attached at residues N51, N77, N103, N144, N163, N178, N212, N237, N247, N264, N271, N276, N306, N425, N447, N513, N530, N579, N591, N669, N676, and N714. A heptad repeat 1 (HR1) region spans residues 769 to 874 (IPFATQLQAR…QVDRLITGRL (106 aa)). Positions 822–866 (QDVVNKQSAILTETMASLNKNFGAISSVIQEIYLQLDAIQANAQV) form a coiled coil. N-linked (GlcNAc...) asparagine; by host glycosylation is found at N947, N960, N979, N1014, N1051, N1058, and N1074. The interval 1024–1105 (NDDFDFDDEL…VWLAIAFATI (82 aa)) is heptad repeat 2 (HR2). Residues 1055–1083 (PVLNITYDIDKIEEVIKGLNDSLIDLETL) are a coiled coil. A helical transmembrane segment spans residues 1096-1116 (VWLAIAFATIIFILILGWVFF). The Cytoplasmic portion of the chain corresponds to 1117–1162 (MTGCCGCCCGCFGIIPLMSKCGKKSSYYTTFDNDVVTEQYRPKKSV). Positions 1159–1162 (KKSV) match the Di-lysine motif motif.

It belongs to the gammacoronaviruses spike protein family. Homotrimer; each monomer consists of a S1 and a S2 subunit. The resulting peplomers protrude from the virus surface as spikes. Specific enzymatic cleavages in vivo yield mature proteins. The precursor is processed into S1 and S2 by host cell furin or furin-like protease to yield the mature S1 and S2 proteins. The cleavage site between S1 and S2 requires the optimal sequence [KR]-X-[KR]-R. Additionally, a second cleavage leads to the release of a fusion peptide after viral attachment to host cell receptor.

It is found in the virion membrane. The protein localises to the host endoplasmic reticulum-Golgi intermediate compartment membrane. Functionally, attaches the virion to the host cell membrane by interacting with sialic acids, initiating the infection. Its function is as follows. Mediates fusion of the virion and cellular membranes by acting as a class I viral fusion protein. Under the current model, the protein has at least 3 conformational states: pre-fusion native state, pre-hairpin intermediate state, and post-fusion hairpin state. During viral and target cell membrane fusion, the coiled coil regions (heptad repeats) assume a trimer-of-hairpins structure, positioning the fusion peptide in close proximity to the C-terminal region of the ectodomain. The formation of this structure appears to drive apposition and subsequent fusion of viral and target cell membranes. In terms of biological role, acts as a viral fusion peptide after S2 cleavage occurring upon virus endocytosis. The polypeptide is Spike glycoprotein (Avian infectious bronchitis virus (strain KB8523) (IBV)).